Here is an 89-residue protein sequence, read N- to C-terminus: MSLSKEFKEEIITKFGGTDKNTGKAEVQVALFSNRISDLTGHLQKHPKDKHSRRGLLMLVSKRKKALKYLQNVAIDRYRQVIADLDLRK.

The protein belongs to the universal ribosomal protein uS15 family. Part of the 30S ribosomal subunit. Forms a bridge to the 50S subunit in the 70S ribosome, contacting the 23S rRNA.

Functionally, one of the primary rRNA binding proteins, it binds directly to 16S rRNA where it helps nucleate assembly of the platform of the 30S subunit by binding and bridging several RNA helices of the 16S rRNA. Its function is as follows. Forms an intersubunit bridge (bridge B4) with the 23S rRNA of the 50S subunit in the ribosome. The chain is Small ribosomal subunit protein uS15 from Chlorobium phaeovibrioides (strain DSM 265 / 1930) (Prosthecochloris vibrioformis (strain DSM 265)).